The chain runs to 245 residues: tRNA (guanine-N(1)-)-methyltransferase (245 aa).

S-adenosyl-L-methionine is bound by residues Gly112 and 132-137 (IGDFVL).

It belongs to the RNA methyltransferase TrmD family. In terms of assembly, homodimer.

The protein localises to the cytoplasm. The enzyme catalyses guanosine(37) in tRNA + S-adenosyl-L-methionine = N(1)-methylguanosine(37) in tRNA + S-adenosyl-L-homocysteine + H(+). Its function is as follows. Specifically methylates guanosine-37 in various tRNAs. This is tRNA (guanine-N(1)-)-methyltransferase from Geobacter sulfurreducens (strain ATCC 51573 / DSM 12127 / PCA).